The sequence spans 123 residues: uncharacterized protein (123 aa).

Residues 76-97 (ENNKRKKKSEGERVRSPRTFRG) form a disordered region.

This is an uncharacterized protein from Saccharomyces cerevisiae (strain ATCC 204508 / S288c) (Baker's yeast).